Here is a 342-residue protein sequence, read N- to C-terminus: Phosphate acyltransferase (342 aa).

It belongs to the PlsX family. In terms of assembly, homodimer. Probably interacts with PlsY.

It is found in the cytoplasm. It catalyses the reaction a fatty acyl-[ACP] + phosphate = an acyl phosphate + holo-[ACP]. It functions in the pathway lipid metabolism; phospholipid metabolism. Catalyzes the reversible formation of acyl-phosphate (acyl-PO(4)) from acyl-[acyl-carrier-protein] (acyl-ACP). This enzyme utilizes acyl-ACP as fatty acyl donor, but not acyl-CoA. In Shewanella loihica (strain ATCC BAA-1088 / PV-4), this protein is Phosphate acyltransferase.